The sequence spans 107 residues: Urease subunit beta (107 aa).

It belongs to the urease beta subunit family. In terms of assembly, heterotrimer of UreA (gamma), UreB (beta) and UreC (alpha) subunits. Three heterotrimers associate to form the active enzyme.

It localises to the cytoplasm. The catalysed reaction is urea + 2 H2O + H(+) = hydrogencarbonate + 2 NH4(+). Its pathway is nitrogen metabolism; urea degradation; CO(2) and NH(3) from urea (urease route): step 1/1. The protein is Urease subunit beta of Teredinibacter turnerae (strain ATCC 39867 / T7901).